A 521-amino-acid chain; its full sequence is MAP kinase-activated protein kinase mak-1 (521 aa).

A compositionally biased stretch (acidic residues) spans 1-12 (MMFEYEEDEDPM). Residues 1–36 (MMFEYEEDEDPMEQQKHEEFKHHSTDHSGSPQENPF) form a disordered region. Basic and acidic residues predominate over residues 13–26 (EQQKHEEFKHHSTD). The Protein kinase domain occupies 144–405 (TISAEIIGIG…IHELMATPLV (262 aa)). Residues 150–158 (IGIGESGKV) and Lys-173 each bind ATP. Asp-266 serves as the catalytic Proton acceptor.

The protein belongs to the protein kinase superfamily. CAMK Ser/Thr protein kinase family. May interact (via protein kinase domain) with unc-22 (via protein kinase and CRD domains). The cofactor is Mg(2+). Autophosphorylated in vitro. In terms of tissue distribution, expressed in body wall muscles (at protein level). Expressed in intestine.

Its subcellular location is the cytoplasm. The protein localises to the myofibril. It is found in the sarcomere. It localises to the a band. It carries out the reaction L-seryl-[protein] + ATP = O-phospho-L-seryl-[protein] + ADP + H(+). The enzyme catalyses L-threonyl-[protein] + ATP = O-phospho-L-threonyl-[protein] + ADP + H(+). Functionally, serine/threonine-protein kinase which may play a role in body wall muscle contraction. May phosphorylate unc-22/twitchin. This chain is MAP kinase-activated protein kinase mak-1, found in Caenorhabditis elegans.